The chain runs to 304 residues: Non-specific ribonucleoside hydrolase RihC (304 aa).

The active site involves His-233.

This sequence belongs to the IUNH family. RihC subfamily.

Functionally, hydrolyzes both purine and pyrimidine ribonucleosides with a broad-substrate specificity. This chain is Non-specific ribonucleoside hydrolase RihC, found in Escherichia coli O127:H6 (strain E2348/69 / EPEC).